The primary structure comprises 283 residues: Shikimate dehydrogenase (NADP(+)) (283 aa).

Residues 16–18 (SLS) and Thr-63 contribute to the shikimate site. The active-site Proton acceptor is Lys-67. Asp-79 contacts NADP(+). Shikimate is bound by residues Asn-88 and Asp-103. Residues 128–132 (GAGGA), Ala-223, and Gly-243 contribute to the NADP(+) site.

The protein belongs to the shikimate dehydrogenase family. As to quaternary structure, homodimer.

It catalyses the reaction shikimate + NADP(+) = 3-dehydroshikimate + NADPH + H(+). The protein operates within metabolic intermediate biosynthesis; chorismate biosynthesis; chorismate from D-erythrose 4-phosphate and phosphoenolpyruvate: step 4/7. Its function is as follows. Involved in the biosynthesis of the chorismate, which leads to the biosynthesis of aromatic amino acids. Catalyzes the reversible NADPH linked reduction of 3-dehydroshikimate (DHSA) to yield shikimate (SA). This chain is Shikimate dehydrogenase (NADP(+)), found in Xanthomonas oryzae pv. oryzae (strain MAFF 311018).